The primary structure comprises 613 residues: Phosphoinositide phospholipase C 6 (613 aa).

In terms of domain architecture, PI-PLC X-box spans 137–281 (QDMTAPLSHY…LLHRIIISTK (145 aa)). Active-site residues include His152 and His198. The interval 288–349 (ESRNPIVKQK…ASEDQKPAYK (62 aa)) is disordered. The PI-PLC Y-box domain occupies 349–465 (KRLITIHAGK…GYVKKPNFLM (117 aa)). A C2 domain is found at 466–595 (KKGFHDEVFD…PGIRSVPLYD (130 aa)).

Requires Ca(2+) as cofactor. Expressed in leaves, flowers and siliques, but not in roots.

Its subcellular location is the cell membrane. The enzyme catalyses a 1,2-diacyl-sn-glycero-3-phospho-(1D-myo-inositol-4,5-bisphosphate) + H2O = 1D-myo-inositol 1,4,5-trisphosphate + a 1,2-diacyl-sn-glycerol + H(+). The production of the second messenger molecules diacylglycerol (DAG) and inositol 1,4,5-trisphosphate (IP3) is mediated by activated phosphatidylinositol-specific phospholipase C enzymes. In Arabidopsis thaliana (Mouse-ear cress), this protein is Phosphoinositide phospholipase C 6 (PLC6).